The sequence spans 293 residues: AKT-interacting protein (293 aa).

Polar residues predominate over residues 1-11 (MNPFWSMSTNA). Residues 1 to 44 (MNPFWSMSTNAGRKRSDGEEQSGSGEQRASPARPPFGKKQLPSI) form a disordered region. A UBC core domain is found at 75-223 (YLEYSLLAEF…VVDSVKLCNS (149 aa)). The disordered stretch occupies residues 260–293 (RPEDFNKGLPVSGLSWVKPGSTQPFSKEDNPLQT).

The protein belongs to the ubiquitin-conjugating enzyme family. FTS subfamily.

It localises to the cytoplasm. The protein localises to the cell membrane. Functionally, may function to promote vesicle trafficking and/or fusion. May also regulate apoptosis. The protein is AKT-interacting protein (aktip) of Danio rerio (Zebrafish).